An 884-amino-acid polypeptide reads, in one-letter code: Probable leucine--tRNA ligase, cytoplasmic (884 aa).

The 'HIGH' region motif lies at 40–50; sequence PYMNGKLHLGH. A 'KMSKS' region motif is present at residues 566–570; that stretch reads KMSKS. ATP is bound at residue K569.

This sequence belongs to the class-I aminoacyl-tRNA synthetase family.

It localises to the cytoplasm. It carries out the reaction tRNA(Leu) + L-leucine + ATP = L-leucyl-tRNA(Leu) + AMP + diphosphate. This is Probable leucine--tRNA ligase, cytoplasmic from Vairimorpha ceranae (strain BRL01) (Microsporidian parasite).